We begin with the raw amino-acid sequence, 145 residues long: Protein SprT-like (145 aa).

The SprT-like domain maps to 4-140 (TNYVQEVSLA…VCGNCHGKLI (137 aa)). H64 lines the Zn(2+) pocket. Residue E65 is part of the active site. A Zn(2+)-binding site is contributed by H68.

It belongs to the SprT family. It depends on Zn(2+) as a cofactor.

Its subcellular location is the cytoplasm. The chain is Protein SprT-like from Streptococcus pyogenes serotype M6 (strain ATCC BAA-946 / MGAS10394).